We begin with the raw amino-acid sequence, 582 residues long: MEPSKLFIMSDNATFAPGPVVNAAGKKTFRTCFRILVLSVQAVTLILVIVTLGELIRMINDQGLSNQLSSITDKIRESAAMIASAVGVMNQVIHGVTVSLPLQIEGNQNQLLSTLATICTNRNQVSNCSTNIPLVNDLRFINGINKFIIEDYATHDFSIGHPLNMPSFIPTATSPNGCTRIPSFSLGKTHWCYTHNVINANCKDHTSSNQYVSMGILVQTASGYPMFKTLKIQYLSDGLNRKSCSIATVPDGCAMYCYVSTQLETDDYAGSSPPTQKLTLLFYNDTIKERTISPSGLEGNWATLVPGVGSGIYFENKLIFPAYGGVLPNSTLGVKSAREFFRPVNPYNPCSGPPQELDQRALRSYFPSYFSSRRVQSAFLVCAWNQILVTNCELVVPSNNQTLMGAEGRVLLINNRLLYYQRSTSWWPYELLYEISFTFTNSGQSSVNMSWIPIYSFTRPGLGKCSGENICPTVCVSGVYLDPWPLTPYSHQSGINRNFYFTGALLNSSTTRVNPTLYVSALNNLKVLAPYGTQGLFASYTTTTCFQDTGDASVYCVYIMELASNIVGEFQILPVLARLTIT.

Residues 35–55 form a helical membrane-spanning segment; sequence ILVLSVQAVTLILVIVTLGEL. 3 disulfide bridges follow: Cys178–Cys202, Cys192–Cys253, and Cys244–Cys257. N-linked (GlcNAc...) asparagine; by host glycans are attached at residues Asn284 and Asn329. 3 cysteine pairs are disulfide-bonded: Cys350-Cys471, Cys382-Cys392, and Cys465-Cys475. N-linked (GlcNAc...) asparagine; by host glycosylation is found at Asn400 and Asn448. Asn507 is a glycosylation site (N-linked (GlcNAc...) asparagine; by host). The cysteines at positions 545 and 556 are disulfide-linked.

Belongs to the paramyxoviruses hemagglutinin-neuraminidase family. In terms of assembly, homodimer. Further forms homotetramer (dimer of dimers). Interacts with F protein trimer.

Its subcellular location is the virion membrane. It is found in the host cell membrane. It carries out the reaction Hydrolysis of alpha-(2-&gt;3)-, alpha-(2-&gt;6)-, alpha-(2-&gt;8)- glycosidic linkages of terminal sialic acid residues in oligosaccharides, glycoproteins, glycolipids, colominic acid and synthetic substrates.. Attaches the virus to alpha-2,3-linked sialic acid-containing cell receptors and thereby initiating infection. Binding of HN protein to the receptor induces a conformational change that allows the F protein to trigger virion/cell membranes fusion. Binds to the glycan motifs sialyl Lewis (SLe) and GM2 ganglioside (GM2-glycan). Functionally, neuraminidase activity ensures the efficient spread of the virus by dissociating the mature virions from the neuraminic acid containing glycoproteins. In Homo sapiens (Human), this protein is Hemagglutinin-neuraminidase (HN).